We begin with the raw amino-acid sequence, 247 residues long: Complement C1q subcomponent subunit A (247 aa).

The first 24 residues, 1–24 (MEAPRGWLVIMISVLAVSLASSAA), serve as a signal peptide directing secretion. The tract at residues 26 to 116 (DTCRDLDGRD…NPGNIKDQRR (91 aa)) is disordered. Residues 27–38 (TCRDLDGRDGAA) show a composition bias toward basic and acidic residues. The region spanning 33–111 (GRDGAARKPG…KGIKGNPGNI (79 aa)) is the Collagen-like domain. Proline 41 and proline 47 each carry 4-hydroxyproline. A 5-hydroxylysine modification is found at lysine 50. A glycan (O-linked (Gal...) hydroxylysine) is linked at lysine 50. 2 positions are modified to 4-hydroxyproline: proline 56 and proline 59. The residue at position 69 (lysine 69) is a 5-hydroxylysine. O-linked (Gal...) hydroxylysine glycosylation occurs at lysine 69. 4-hydroxyproline is present on residues proline 81 and proline 87. The segment covering 98-109 (LPGLKGIKGNPG) has biased composition (low complexity). Lysine 102 is modified (5-hydroxylysine). Residue lysine 102 is glycosylated (O-linked (Gal...) hydroxylysine). Positions 112–247 (KDQRRPAFSA…FSGFLIFPST (136 aa)) constitute a C1q domain. A disulfide bridge links cysteine 174 with cysteine 192. Glutamine 201 is a Ca(2+) binding site.

In terms of assembly, core component of the complement C1 complex, a calcium-dependent complex composed of 1 molecule of the C1Q subcomplex, 2 molecules of C1R and 2 molecules of C1S. The C1Q subcomplex is composed 18 subunits: 3 chains of C1QA, C1QB, and C1QC trimerize to form 6 collagen-like triple helices connected to six globular ligand-recognition modules (C1q domain). Interacts with CR1 (via Sushi 24 and Sushi 25 domains). Interacts (via C-terminus) with CD33; this interaction activates CD33 inhibitory motifs. O-linked glycans are assumed to be the Glc-Gal disaccharides typically found as secondary modifications of hydroxylated lysines in collagen-like domains.

The protein resides in the secreted. It is found in the cell surface. With respect to regulation, the C1Q subcomplex is inhibited by sulfated molecules, such as triterpenoid sulfates, heparan sulfate, or chondroitin sulfates. Its function is as follows. Core component of the complement C1 complex, a multiprotein complex that initiates the classical pathway of the complement system, a cascade of proteins that leads to phagocytosis and breakdown of pathogens and signaling that strengthens the adaptive immune system. The classical complement pathway is initiated by the C1Q subcomplex of the C1 complex, which specifically binds IgG or IgM immunoglobulins complexed with antigens, forming antigen-antibody complexes on the surface of pathogens: C1QA, together with C1QB and C1QC, specifically recognizes and binds the Fc regions of IgG or IgM via its C1q domain. Immunoglobulin-binding activates the proenzyme C1R, which cleaves C1S, initiating the proteolytic cascade of the complement system. The C1Q subcomplex is activated by a hexamer of IgG complexed with antigens, while it is activated by a pentameric IgM. The C1Q subcomplex also recognizes and binds phosphatidylserine exposed on the surface of cells undergoing programmed cell death, possibly promoting activation of the complement system. The sequence is that of Complement C1q subcomponent subunit A (C1QA) from Sus scrofa (Pig).